We begin with the raw amino-acid sequence, 199 residues long: ATP-dependent Clp protease proteolytic subunit 2 (199 aa).

Catalysis depends on Ser-98, which acts as the Nucleophile. His-123 is a catalytic residue.

Belongs to the peptidase S14 family. Fourteen ClpP subunits assemble into 2 heptameric rings which stack back to back to give a disk-like structure with a central cavity, resembling the structure of eukaryotic proteasomes.

It localises to the cytoplasm. The catalysed reaction is Hydrolysis of proteins to small peptides in the presence of ATP and magnesium. alpha-casein is the usual test substrate. In the absence of ATP, only oligopeptides shorter than five residues are hydrolyzed (such as succinyl-Leu-Tyr-|-NHMec, and Leu-Tyr-Leu-|-Tyr-Trp, in which cleavage of the -Tyr-|-Leu- and -Tyr-|-Trp bonds also occurs).. Its function is as follows. Cleaves peptides in various proteins in a process that requires ATP hydrolysis. Has a chymotrypsin-like activity. Plays a major role in the degradation of misfolded proteins. This is ATP-dependent Clp protease proteolytic subunit 2 from Corynebacterium diphtheriae (strain ATCC 700971 / NCTC 13129 / Biotype gravis).